The following is a 261-amino-acid chain: MTHQTHAYHMVNPSPWPLTGALSALLMTSGLAMWFHFNSTILLMIGLTTNTLTMYQWWRDVIRESTFQGHHTPTVQKGLRYGMILFIISEVLFFTGFFWAFYHSSLAPTPELGGCWPPTGIHPLNPLEVPLLNTSVLLASGVSITWAHHSLMEGNRYPMLQALFITIALGVYFTLLQASEYYEAPFTISDGIYGSTFFVATGFHGLHVIIGSTFLIVCFFRQLKFHFTSNHHFGFEAAAWYWHFVDVVWLFLYVSIYWWGS.

The Mitochondrial matrix portion of the chain corresponds to 1 to 15; it reads MTHQTHAYHMVNPSP. The chain crosses the membrane as a helical span at residues 16 to 34; sequence WPLTGALSALLMTSGLAMW. Over 35–40 the chain is Mitochondrial intermembrane; the sequence is FHFNST. A helical membrane pass occupies residues 41-66; it reads ILLMIGLTTNTLTMYQWWRDVIREST. Residues 67 to 72 are Mitochondrial matrix-facing; it reads FQGHHT. A helical membrane pass occupies residues 73 to 105; the sequence is PTVQKGLRYGMILFIISEVLFFTGFFWAFYHSS. Over 106–128 the chain is Mitochondrial intermembrane; it reads LAPTPELGGCWPPTGIHPLNPLE. Residues 129-152 form a helical membrane-spanning segment; sequence VPLLNTSVLLASGVSITWAHHSLM. Over 153–155 the chain is Mitochondrial matrix; the sequence is EGN. Residues 156–183 form a helical membrane-spanning segment; it reads RYPMLQALFITIALGVYFTLLQASEYYE. At 184-190 the chain is on the mitochondrial intermembrane side; it reads APFTISD. A helical membrane pass occupies residues 191–223; it reads GIYGSTFFVATGFHGLHVIIGSTFLIVCFFRQL. Residues 224–232 lie on the Mitochondrial matrix side of the membrane; it reads KFHFTSNHH. Residues 233–256 traverse the membrane as a helical segment; that stretch reads FGFEAAAWYWHFVDVVWLFLYVSI. The Mitochondrial intermembrane segment spans residues 257–261; it reads YWWGS.

This sequence belongs to the cytochrome c oxidase subunit 3 family. Component of the cytochrome c oxidase (complex IV, CIV), a multisubunit enzyme composed of 14 subunits. The complex is composed of a catalytic core of 3 subunits MT-CO1, MT-CO2 and MT-CO3, encoded in the mitochondrial DNA, and 11 supernumerary subunits COX4I, COX5A, COX5B, COX6A, COX6B, COX6C, COX7A, COX7B, COX7C, COX8 and NDUFA4, which are encoded in the nuclear genome. The complex exists as a monomer or a dimer and forms supercomplexes (SCs) in the inner mitochondrial membrane with NADH-ubiquinone oxidoreductase (complex I, CI) and ubiquinol-cytochrome c oxidoreductase (cytochrome b-c1 complex, complex III, CIII), resulting in different assemblies (supercomplex SCI(1)III(2)IV(1) and megacomplex MCI(2)III(2)IV(2)).

The protein resides in the mitochondrion inner membrane. It catalyses the reaction 4 Fe(II)-[cytochrome c] + O2 + 8 H(+)(in) = 4 Fe(III)-[cytochrome c] + 2 H2O + 4 H(+)(out). Its function is as follows. Component of the cytochrome c oxidase, the last enzyme in the mitochondrial electron transport chain which drives oxidative phosphorylation. The respiratory chain contains 3 multisubunit complexes succinate dehydrogenase (complex II, CII), ubiquinol-cytochrome c oxidoreductase (cytochrome b-c1 complex, complex III, CIII) and cytochrome c oxidase (complex IV, CIV), that cooperate to transfer electrons derived from NADH and succinate to molecular oxygen, creating an electrochemical gradient over the inner membrane that drives transmembrane transport and the ATP synthase. Cytochrome c oxidase is the component of the respiratory chain that catalyzes the reduction of oxygen to water. Electrons originating from reduced cytochrome c in the intermembrane space (IMS) are transferred via the dinuclear copper A center (CU(A)) of subunit 2 and heme A of subunit 1 to the active site in subunit 1, a binuclear center (BNC) formed by heme A3 and copper B (CU(B)). The BNC reduces molecular oxygen to 2 water molecules using 4 electrons from cytochrome c in the IMS and 4 protons from the mitochondrial matrix. This is Cytochrome c oxidase subunit 3 (MT-CO3) from Raphicerus melanotis (Cape grysbok).